Reading from the N-terminus, the 313-residue chain is Protein PALE CRESS, chloroplastic (313 aa).

Residues 1 to 22 (MAATSLVLTCASPLFSSPRVIS) constitute a chloroplast transit peptide.

As to expression, expressed in green tissues, including leaves. Accumulates in chloroplasts of mature stomatal guard cells.

The protein resides in the plastid. Its subcellular location is the chloroplast. The protein localises to the chromoplast. It is found in the etioplast. It localises to the amyloplast. Required for the differentiation of chloroplast from proplastids or etioplasts, probably by modulating some chloroplast-encoded genes expression and mRNA maturation. Involved in leaf-cells differentiation. This Arabidopsis thaliana (Mouse-ear cress) protein is Protein PALE CRESS, chloroplastic (PAC).